A 192-amino-acid chain; its full sequence is Small ribosomal subunit protein eS7 (192 aa).

Belongs to the eukaryotic ribosomal protein eS7 family.

The polypeptide is Small ribosomal subunit protein eS7 (RpS7) (Culex quinquefasciatus (Southern house mosquito)).